Reading from the N-terminus, the 304-residue chain is Homoserine kinase (304 aa).

92-102 (PLARGLGSSAT) provides a ligand contact to ATP.

It belongs to the GHMP kinase family. Homoserine kinase subfamily.

Its subcellular location is the cytoplasm. The catalysed reaction is L-homoserine + ATP = O-phospho-L-homoserine + ADP + H(+). It functions in the pathway amino-acid biosynthesis; L-threonine biosynthesis; L-threonine from L-aspartate: step 4/5. Catalyzes the ATP-dependent phosphorylation of L-homoserine to L-homoserine phosphate. The protein is Homoserine kinase of Nostoc punctiforme (strain ATCC 29133 / PCC 73102).